The sequence spans 259 residues: MLIVVSPAKTLDYDSPLATQTYTLPELTDHSSELMKVCRELTPMDIASLMKVSDKIAGLNAARFAEWQPEFTTENARQAILAFKGDVYTGLAAETMTEEDFAYTQQHLRMLSGLYGLLRPLDLMQPYRLEMGTKLANPRGANLYQFWGSVITEKLNAALAEQGDNILINLASNEYFKSVKPKSLDAQLITPVFKDCKNGNYKVISFYAKKARGMMARYIIDNRIKSVDELKQFDVAGYYFVPAESTRKEFVFKREEQVK.

It belongs to the UPF0246 family.

The sequence is that of UPF0246 protein PBPRA0561 from Photobacterium profundum (strain SS9).